A 271-amino-acid chain; its full sequence is MKSYHPKSLLNDLQYYITPPHDCSYLENKSARMVFLDPIHRIDVVTLSELSRLGFRRSGDFVYRPECHLCRQCLSCRVPVADFQMNSMQKKAWKRNQDLTMTVLPTRQASQIHYDLYERYINERHADGDMFPPSLDQFEKFLVHSCTDSFFLELWKDNRLISVSTCDLMDDGLSAVYTFFDPDEHRRSLGVYSILNQIEYVKTLGLEYVYLGYWVPHSAKMNYKSQYTPLELLLDGQWRRLNRSLSPEEINQLGNSLMTTLPSEWNNLIIK.

This sequence belongs to the R-transferase family. Bpt subfamily.

Its subcellular location is the cytoplasm. The catalysed reaction is N-terminal L-glutamyl-[protein] + L-leucyl-tRNA(Leu) = N-terminal L-leucyl-L-glutamyl-[protein] + tRNA(Leu) + H(+). It carries out the reaction N-terminal L-aspartyl-[protein] + L-leucyl-tRNA(Leu) = N-terminal L-leucyl-L-aspartyl-[protein] + tRNA(Leu) + H(+). Its function is as follows. Functions in the N-end rule pathway of protein degradation where it conjugates Leu from its aminoacyl-tRNA to the N-termini of proteins containing an N-terminal aspartate or glutamate. This is Aspartate/glutamate leucyltransferase from Acinetobacter baumannii (strain SDF).